The sequence spans 274 residues: 23S rRNA (adenosine(1067)-2'-O)-methyltransferase (274 aa).

Residues R165, L195, 218 to 220, 238 to 240, and 247 to 252 contribute to the S-adenosyl-L-methionine site; these read GSE, IPM, and LNVSVS.

The protein belongs to the class IV-like SAM-binding methyltransferase superfamily. RNA methyltransferase TsnR/AvirB family. As to quaternary structure, homodimer.

It carries out the reaction adenosine(1067) in 23S rRNA + S-adenosyl-L-methionine = 2'-O-methyladenosine(1067) in 23S rRNA + S-adenosyl-L-homocysteine + H(+). Specifically methylates the adenosine-1067 in 23S ribosomal RNA. Confers resistance to antibiotic nosiheptide. In Streptomyces actuosus, this protein is 23S rRNA (adenosine(1067)-2'-O)-methyltransferase.